A 240-amino-acid chain; its full sequence is Orotidine 5'-phosphate decarboxylase (240 aa).

Substrate-binding positions include Asp10, Lys32, 59–68, Thr122, Arg183, Gln192, Gly212, and Arg213; that span reads DLKLHDIPNT. Lys61 (proton donor) is an active-site residue.

This sequence belongs to the OMP decarboxylase family. Type 1 subfamily. As to quaternary structure, homodimer.

The catalysed reaction is orotidine 5'-phosphate + H(+) = UMP + CO2. It participates in pyrimidine metabolism; UMP biosynthesis via de novo pathway; UMP from orotate: step 2/2. Functionally, catalyzes the decarboxylation of orotidine 5'-monophosphate (OMP) to uridine 5'-monophosphate (UMP). In Carboxydothermus hydrogenoformans (strain ATCC BAA-161 / DSM 6008 / Z-2901), this protein is Orotidine 5'-phosphate decarboxylase.